Consider the following 815-residue polypeptide: Sodium/hydrogen exchanger 1 (815 aa).

The Extracellular segment spans residues 1–98 (MVLRSGICGL…FPVLGIDYTH (98 aa)). The O-linked (GalNAc...) threonine glycan is linked to Thr42. The interval 42–79 (TASTIRSSEPPRERSIGDVTTAPPEVTPESRPVNHSVT) is disordered. Ser56 carries O-linked (GalNAc...) serine glycosylation. Thr61, Thr62, and Thr68 each carry an O-linked (GalNAc...) threonine glycan. N-linked (GlcNAc...) asparagine glycosylation is present at Asn75. The chain crosses the membrane as a helical span at residues 99-121 (VRTPFEISLWILLACLMKIGFHV). The Cytoplasmic segment spans residues 122-130 (IPTISSIVP). A helical membrane pass occupies residues 131-148 (ESCLLIVVGLLVGGLIKG). Over 149–158 (VGETPPFLQS) the chain is Extracellular. The helical transmembrane segment at 159 to 176 (DVFFLFLLPPIILDAGYF) threads the bilayer. Topologically, residues 177–186 (LPLRQFTENL) are cytoplasmic. The chain crosses the membrane as a helical span at residues 187–215 (GTILIFAVVGTLWNAFFLGGLMYAVCLVG). Topologically, residues 216-222 (GEQINNI) are extracellular. Residues 223–249 (GLLDNLLFGSIISAVDPVAVLAVFEEI) traverse the membrane as a helical segment. Residues 250–252 (HIN) are Cytoplasmic-facing. Residues 253–283 (ELLHILVFGESLLNDAVTVVLYHLFEEFANY) traverse the membrane as a helical segment. The Extracellular portion of the chain corresponds to 284–287 (EHVG). The helical transmembrane segment at 288-322 (IVDIFLGFLSFFVVALGGVLVGVVYGVIAAFTSRF) threads the bilayer. Residues 323–328 (TSHIRV) are Cytoplasmic-facing. The helical transmembrane segment at 329 to 341 (IEPLFVFLYSYMA) threads the bilayer. Residues 342 to 350 (YLSAELFHL) lie on the Extracellular side of the membrane. The chain crosses the membrane as a helical span at residues 351–371 (SGIMALIASGVVMRPYVEANI). Over 372 to 373 (SH) the chain is Cytoplasmic. A helical transmembrane segment spans residues 374–404 (KSHTTIKYFLKMWSSVSETLIFIFLGVSTVA). The Extracellular segment spans residues 405–410 (GSHHWN). A helical transmembrane segment spans residues 411-438 (WTFVISTLLFCLIARVLGVLGLTWFINK). At 439 to 444 (FRIVKL) the chain is on the cytoplasmic side. Residues 445–469 (TPKDQFIIAYGGLRGAIAFSLGYLL) traverse the membrane as a helical segment. Residues 470–475 (DKKHFP) lie on the Extracellular side of the membrane. The chain crosses the membrane as a helical span at residues 476-505 (MCDLFLTAIITVIFFTVFVQGMTIRPLVDL). The interval 503-545 (VDLLAVKKKQETKRSINEEIHTQFLDHLLTGIEDICGHYGHHH) is interaction with TESC. Topologically, residues 506-815 (LAVKKKQETK…EGEPFFPKGQ (310 aa)) are cytoplasmic. The segment at 509–516 (KKKQETKR) is PI(4,5)P2-binding region. Positions 515–545 (KRSINEEIHTQFLDHLLTGIEDICGHYGHHH) are interaction with CHP2. The segment at 540–545 (HYGHHH) is confers pH-dependent PI(4,5)P2 binding. The segment at 552–560 (RFNKKYVKK) is PI(4,5)P2-binding region. A phosphoserine mark is found at Ser599 and Ser602. The residue at position 603 (Thr603) is a Phosphothreonine. Phosphoserine is present on residues Ser605 and Ser648. The tract at residues 633–815 (KILRNNLQKT…EGEPFFPKGQ (183 aa)) is interaction with TESC. The interval 633-815 (KILRNNLQKT…EGEPFFPKGQ (183 aa)) is interaction with CALM1. An interaction with PPP3CA region spans residues 684-687 (LTVP). Phosphoserine is present on residues Ser693, Ser697, and Ser703. An interaction with PPP3CA region spans residues 715–720 (PVITID). Ser723, Ser726, and Ser729 each carry phosphoserine. Residues 744 to 815 (LSRDPAKVAE…EGEPFFPKGQ (72 aa)) are disordered. Thr779 carries the phosphothreonine modification. A compositionally biased stretch (polar residues) spans 782–791 (PSDSPSSQRI). A phosphoserine mark is found at Ser785, Ser787, and Ser796.

It belongs to the monovalent cation:proton antiporter 1 (CPA1) transporter (TC 2.A.36) family. As to quaternary structure, homodimer; dimerization is crucial for its function. Oligomer. Interacts with CALM1 in a calcium-dependent manner. Interacts with TESC. Interacts (via the C-terminal domain) with CHP1; the interaction occurs at the plasma membrane in a calcium-dependent manner and facilitates the maturation, cell surface expression, and function of SLC9A3. Interacts with CHP2; the interaction occurs in a calcium-dependent manner. Interacts with EZR; regulates the cytoskeletal interactions of SLC9A1 and promotes stress fiber formation. In terms of processing, O-glycosylated. Post-translationally, ubiquitinated, leading to its degradation by the proteasome. Ubiquitination is reduced by CHP1. Phosphorylation at Thr-779 increases SLC9A1 activity. Specifically dephosphorylated at Thr-779 by PPP3CA that negatively regulates SLC9A1 activity. Phosphorylation at Ser-648 by AKT1 reduces SLC9A1 binding to CALM1. In terms of processing, palmitoylated; may play a major role in SLC9A1 regulation. As to expression, kidney and intestine.

The protein localises to the cell membrane. The protein resides in the basolateral cell membrane. The catalysed reaction is Na(+)(in) + H(+)(out) = Na(+)(out) + H(+)(in). It catalyses the reaction Li(+)(out) + H(+)(in) = Li(+)(in) + H(+)(out). The enzyme catalyses Li(+)(in) + Na(+)(out) = Li(+)(out) + Na(+)(in). With respect to regulation, activated at acidic pHs. Inhibited by amiloride and 5-amino-substituted derivatives. Inhibited by cariporide and eniporide. Phosphatidylinositol 4,5-bisphosphate (PI(4,5)P2) and phosphatidylinositol 3,4,5-trisphosphate (PI(3,4,5)P3) bind and differentially regulate SLC9A1 activity. Functionally, electroneutral Na(+) /H(+) antiporter that extrudes Na(+) in exchange for external protons driven by the inward sodium ion chemical gradient, protecting cells from acidification that occurs from metabolism. Exchanges intracellular H(+) ions for extracellular Na(+) in 1:1 stoichiometry. Plays a key role in maintening intracellular pH neutral and cell volume, and thus is important for cell growth, proliferation, migration and survival. In addition, can transport lithium Li(+) and also functions as a Na(+)/Li(+) antiporter. SLC9A1 also functions in membrane anchoring and organization of scaffolding complexes that coordinate signaling inputs. In Homo sapiens (Human), this protein is Sodium/hydrogen exchanger 1.